A 147-amino-acid polypeptide reads, in one-letter code: uncharacterized protein (147 aa).

The disordered stretch occupies residues valine 51–methionine 72.

This is an uncharacterized protein from Gallid herpesvirus 2 (strain GA) (GaHV-2).